A 2300-amino-acid chain; its full sequence is Protein Ycf2 (2300 aa).

1642-1649 (GSIGTGRS) lines the ATP pocket.

This sequence belongs to the Ycf2 family.

It localises to the plastid. It is found in the chloroplast stroma. Its function is as follows. Probable ATPase of unknown function. Its presence in a non-photosynthetic plant (Epifagus virginiana) and experiments in tobacco indicate that it has an essential function which is probably not related to photosynthesis. The protein is Protein Ycf2 of Vitis vinifera (Grape).